Reading from the N-terminus, the 348-residue chain is Lipoyl synthase (348 aa).

Cys-55, Cys-60, Cys-66, Cys-81, Cys-85, Cys-88, and Ser-292 together coordinate [4Fe-4S] cluster. The Radical SAM core domain maps to 67 to 281 (WESREATFLI…ADAAKEMGFA (215 aa)).

Belongs to the radical SAM superfamily. Lipoyl synthase family. [4Fe-4S] cluster is required as a cofactor.

Its subcellular location is the cytoplasm. The catalysed reaction is [[Fe-S] cluster scaffold protein carrying a second [4Fe-4S](2+) cluster] + N(6)-octanoyl-L-lysyl-[protein] + 2 oxidized [2Fe-2S]-[ferredoxin] + 2 S-adenosyl-L-methionine + 4 H(+) = [[Fe-S] cluster scaffold protein] + N(6)-[(R)-dihydrolipoyl]-L-lysyl-[protein] + 4 Fe(3+) + 2 hydrogen sulfide + 2 5'-deoxyadenosine + 2 L-methionine + 2 reduced [2Fe-2S]-[ferredoxin]. It functions in the pathway protein modification; protein lipoylation via endogenous pathway; protein N(6)-(lipoyl)lysine from octanoyl-[acyl-carrier-protein]: step 2/2. Catalyzes the radical-mediated insertion of two sulfur atoms into the C-6 and C-8 positions of the octanoyl moiety bound to the lipoyl domains of lipoate-dependent enzymes, thereby converting the octanoylated domains into lipoylated derivatives. The protein is Lipoyl synthase of Corynebacterium glutamicum (strain R).